The primary structure comprises 141 residues: Hydroperoxide reductase (141 aa).

It belongs to the OsmC/Ohr family. Homodimer.

It localises to the cytoplasm. Its function is as follows. Reduces organic and inorganic peroxide substrates. Protects the cell against oxidative stress. This chain is Hydroperoxide reductase, found in Mycoplasma pneumoniae (strain ATCC 29342 / M129 / Subtype 1) (Mycoplasmoides pneumoniae).